Consider the following 89-residue polypeptide: Small ribosomal subunit protein bS20 (89 aa).

The segment at 1–26 (MANSPQAKKRARQNEKNRKHNASLRS) is disordered. Residues 7 to 22 (AKKRARQNEKNRKHNA) show a composition bias toward basic residues.

This sequence belongs to the bacterial ribosomal protein bS20 family.

Its function is as follows. Binds directly to 16S ribosomal RNA. This Marinobacter nauticus (strain ATCC 700491 / DSM 11845 / VT8) (Marinobacter aquaeolei) protein is Small ribosomal subunit protein bS20.